A 66-amino-acid chain; its full sequence is Large ribosomal subunit protein uL29 (66 aa).

Belongs to the universal ribosomal protein uL29 family.

In Rhizobium etli (strain ATCC 51251 / DSM 11541 / JCM 21823 / NBRC 15573 / CFN 42), this protein is Large ribosomal subunit protein uL29.